Here is a 245-residue protein sequence, read N- to C-terminus: Chlorophyll a-b binding protein 1B-21, chloroplastic (245 aa).

The transit peptide at 1–44 directs the protein to the chloroplast; the sequence is MASSSGLRSCSAVGVPSLLAPSSRSGRSGLPFCAYATTSGRVTM. Tryptophan 48 is a chlorophyll b binding site. Chlorophyll a is bound by residues phenylalanine 68, glutamate 87, and histidine 90. Chlorophyll b is bound at residue arginine 92. Residues 93-113 traverse the membrane as a helical segment; sequence WAMLCVPGVLVPEALGLGNWV. Residue leucine 129 participates in chlorophyll a binding. A helical membrane pass occupies residues 132–152; the sequence is PVPWGNLPTILAIEFLAIAFA. Chlorophyll b is bound by residues valine 133, glutamate 153, and arginine 156. Chlorophyll a is bound by residues lysine 190, glutamate 191, asparagine 194, arginine 196, glutamine 208, and histidine 224.

This sequence belongs to the light-harvesting chlorophyll a/b-binding (LHC) protein family. As to quaternary structure, the LHC complex consists of chlorophyll a-b binding proteins. Binds at least 14 chlorophylls (8 Chl-a and 6 Chl-b) and carotenoids such as lutein and neoxanthin. is required as a cofactor. Post-translationally, photoregulated by reversible phosphorylation of its threonine residues.

The protein localises to the plastid. It localises to the chloroplast thylakoid membrane. Functionally, the light-harvesting complex (LHC) functions as a light receptor, it captures and delivers excitation energy to photosystems with which it is closely associated. The chain is Chlorophyll a-b binding protein 1B-21, chloroplastic (LHC Ib-21) from Hordeum vulgare (Barley).